The sequence spans 180 residues: Secreted RxLR effector protein 19 (180 aa).

An N-terminal signal peptide occupies residues 1–19 (MKLLLRALATFVLLNGVDS). Residues 25–171 (FQKCNVTGGP…IFALGALWGP (147 aa)) enclose the Jacalin-type lectin domain. Residues 52-77 (RALRLCGVDFVDGIGVTIWDLSVEEN) carry the RxLR-dEER motif.

The protein belongs to the RxLR effector family.

It localises to the secreted. The protein resides in the host cytoplasm. The protein localises to the host nucleus. Its function is as follows. Effector that partially suppresses the tobacco programmed cell death induced by cell death-inducing proteins. The chain is Secreted RxLR effector protein 19 from Plasmopara viticola (Downy mildew of grapevine).